The primary structure comprises 229 residues: Protein-L-isoaspartate O-methyltransferase (229 aa).

Ser74 is an active-site residue.

This sequence belongs to the methyltransferase superfamily. L-isoaspartyl/D-aspartyl protein methyltransferase family.

Its subcellular location is the cytoplasm. It carries out the reaction [protein]-L-isoaspartate + S-adenosyl-L-methionine = [protein]-L-isoaspartate alpha-methyl ester + S-adenosyl-L-homocysteine. Its function is as follows. Catalyzes the methyl esterification of L-isoaspartyl residues in peptides and proteins that result from spontaneous decomposition of normal L-aspartyl and L-asparaginyl residues. It plays a role in the repair and/or degradation of damaged proteins. This Pelotomaculum thermopropionicum (strain DSM 13744 / JCM 10971 / SI) protein is Protein-L-isoaspartate O-methyltransferase.